The primary structure comprises 138 residues: Large ribosomal subunit protein uL16 (138 aa).

Residues 1 to 14 (MLQPKRTKYRRTHR) show a composition bias toward basic residues. The interval 1 to 24 (MLQPKRTKYRRTHRLQHDKGEAHT) is disordered. Residues 15–24 (LQHDKGEAHT) are compositionally biased toward basic and acidic residues.

The protein belongs to the universal ribosomal protein uL16 family. As to quaternary structure, part of the 50S ribosomal subunit.

In terms of biological role, binds 23S rRNA and is also seen to make contacts with the A and possibly P site tRNAs. This is Large ribosomal subunit protein uL16 from Mycoplasma mobile (strain ATCC 43663 / 163K / NCTC 11711) (Mesomycoplasma mobile).